We begin with the raw amino-acid sequence, 514 residues long: CENP-B homolog protein 1 (514 aa).

The HTH CENPB-type domain occupies Asp-69–Ala-144.

The protein resides in the nucleus. Its subcellular location is the chromosome. It localises to the centromere. In terms of biological role, binds to centromeric K-type repeat DNA and ARS3002 DNA. The CBH-binding consensus sequence is Py-Pu-A-T-A-T-Py-Pu-T-A. The sequence is that of CENP-B homolog protein 1 (cbh1) from Schizosaccharomyces pombe (strain 972 / ATCC 24843) (Fission yeast).